We begin with the raw amino-acid sequence, 89 residues long: Small ribosomal subunit protein uS19 (89 aa).

Belongs to the universal ribosomal protein uS19 family.

In terms of biological role, protein S19 forms a complex with S13 that binds strongly to the 16S ribosomal RNA. This Xylella fastidiosa (strain M23) protein is Small ribosomal subunit protein uS19.